A 256-amino-acid chain; its full sequence is Receptor expression-enhancing protein 3 (256 aa).

3 helical membrane-spanning segments follow: residues methionine 1–tyrosine 21, tryptophan 42–phenylalanine 62, and isoleucine 68–tyrosine 88. The interval isoleucine 177–serine 256 is disordered. Residues asparagine 247–serine 256 show a composition bias toward polar residues.

The protein belongs to the DP1 family.

It localises to the endoplasmic reticulum membrane. Functionally, microtubule-binding protein required to ensure proper cell division and nuclear envelope reassembly by sequestering the endoplasmic reticulum away from chromosomes during mitosis. Probably acts by clearing the endoplasmic reticulum membrane from metaphase chromosomes. In Danio rerio (Zebrafish), this protein is Receptor expression-enhancing protein 3 (reep3).